The sequence spans 473 residues: Photosystem II CP43 reaction center protein (473 aa).

Residues 1–14 (MKILYSLRRFYHVE) constitute a propeptide that is removed on maturation. N-acetylthreonine is present on T15. At T15 the chain carries Phosphothreonine. Transmembrane regions (helical) follow at residues 69–93 (LFEV…PHLA), 134–155 (LLGP…KDRN), 178–200 (KALY…RKIT), 255–275 (KPFA…LSYS), and 291–312 (WFNN…ASQA). E367 provides a ligand contact to [CaMn4O5] cluster. Residues 447 to 471 (RARAAAAGFEKGIDRDLEPVLYMNP) form a helical membrane-spanning segment.

This sequence belongs to the PsbB/PsbC family. PsbC subfamily. In terms of assembly, PSII is composed of 1 copy each of membrane proteins PsbA, PsbB, PsbC, PsbD, PsbE, PsbF, PsbH, PsbI, PsbJ, PsbK, PsbL, PsbM, PsbT, PsbX, PsbY, PsbZ, Psb30/Ycf12, at least 3 peripheral proteins of the oxygen-evolving complex and a large number of cofactors. It forms dimeric complexes. Requires Binds multiple chlorophylls and provides some of the ligands for the Ca-4Mn-5O cluster of the oxygen-evolving complex. It may also provide a ligand for a Cl- that is required for oxygen evolution. PSII binds additional chlorophylls, carotenoids and specific lipids. as cofactor.

The protein resides in the plastid. It is found in the chloroplast thylakoid membrane. Functionally, one of the components of the core complex of photosystem II (PSII). It binds chlorophyll and helps catalyze the primary light-induced photochemical processes of PSII. PSII is a light-driven water:plastoquinone oxidoreductase, using light energy to abstract electrons from H(2)O, generating O(2) and a proton gradient subsequently used for ATP formation. This is Photosystem II CP43 reaction center protein from Lolium perenne (Perennial ryegrass).